The sequence spans 137 residues: Ribosomal RNA large subunit methyltransferase H (137 aa).

S-adenosyl-L-methionine-binding positions include L56, G85, and 104–109; that span reads LSPLTF.

It belongs to the RNA methyltransferase RlmH family. In terms of assembly, homodimer.

Its subcellular location is the cytoplasm. It catalyses the reaction pseudouridine(1915) in 23S rRNA + S-adenosyl-L-methionine = N(3)-methylpseudouridine(1915) in 23S rRNA + S-adenosyl-L-homocysteine + H(+). Specifically methylates the pseudouridine at position 1915 (m3Psi1915) in 23S rRNA. This is Ribosomal RNA large subunit methyltransferase H from Prochlorococcus marinus subsp. pastoris (strain CCMP1986 / NIES-2087 / MED4).